The primary structure comprises 76 residues: Acyl carrier protein (76 aa).

In terms of domain architecture, Carrier spans 1-76; the sequence is MATFDDVKDV…AAVDYIDNNQ (76 aa). Ser-36 bears the O-(pantetheine 4'-phosphoryl)serine mark.

This sequence belongs to the acyl carrier protein (ACP) family. Post-translationally, 4'-phosphopantetheine is transferred from CoA to a specific serine of apo-ACP by AcpS. This modification is essential for activity because fatty acids are bound in thioester linkage to the sulfhydryl of the prosthetic group.

Its subcellular location is the cytoplasm. It participates in lipid metabolism; fatty acid biosynthesis. In terms of biological role, carrier of the growing fatty acid chain in fatty acid biosynthesis. The sequence is that of Acyl carrier protein from Deinococcus radiodurans (strain ATCC 13939 / DSM 20539 / JCM 16871 / CCUG 27074 / LMG 4051 / NBRC 15346 / NCIMB 9279 / VKM B-1422 / R1).